We begin with the raw amino-acid sequence, 103 residues long: Large ribosomal subunit protein bL21 (103 aa).

This sequence belongs to the bacterial ribosomal protein bL21 family. As to quaternary structure, part of the 50S ribosomal subunit. Contacts protein L20.

Its function is as follows. This protein binds to 23S rRNA in the presence of protein L20. This Alteromonas mediterranea (strain DSM 17117 / CIP 110805 / LMG 28347 / Deep ecotype) protein is Large ribosomal subunit protein bL21.